Reading from the N-terminus, the 714-residue chain is Fatty acid oxidation complex subunit alpha (714 aa).

Residues 1–190 form an enoyl-CoA hydratase region; it reads MEMASAFTLN…KLGLVDDVVP (190 aa). The tract at residues 306–714 is 3-hydroxyacyl-CoA dehydrogenase; the sequence is APLNSVGILG…FWKTTATDLQ (409 aa).

In the N-terminal section; belongs to the enoyl-CoA hydratase/isomerase family. The protein in the central section; belongs to the 3-hydroxyacyl-CoA dehydrogenase family. As to quaternary structure, heterotetramer of two alpha chains (FadJ) and two beta chains (FadI).

It localises to the cytoplasm. The enzyme catalyses a (3S)-3-hydroxyacyl-CoA = a (2E)-enoyl-CoA + H2O. It catalyses the reaction a 4-saturated-(3S)-3-hydroxyacyl-CoA = a (3E)-enoyl-CoA + H2O. It carries out the reaction a (3S)-3-hydroxyacyl-CoA + NAD(+) = a 3-oxoacyl-CoA + NADH + H(+). The catalysed reaction is (3S)-3-hydroxybutanoyl-CoA = (3R)-3-hydroxybutanoyl-CoA. It functions in the pathway lipid metabolism; fatty acid beta-oxidation. In terms of biological role, catalyzes the formation of a hydroxyacyl-CoA by addition of water on enoyl-CoA. Also exhibits 3-hydroxyacyl-CoA epimerase and 3-hydroxyacyl-CoA dehydrogenase activities. The protein is Fatty acid oxidation complex subunit alpha of Shigella flexneri.